Reading from the N-terminus, the 162-residue chain is UPF0114 protein Sputw3181_3501 (162 aa).

The next 3 membrane-spanning stretches (helical) occupy residues 15-35 (IMAPIYLGLSLVLLGLGIKFF), 53-73 (LVLVTLSLIDITLVGGLIVMV), and 136-156 (IMWYLLIHITFVLSAFAMGYL).

This sequence belongs to the UPF0114 family.

The protein localises to the cell membrane. The chain is UPF0114 protein Sputw3181_3501 from Shewanella sp. (strain W3-18-1).